Reading from the N-terminus, the 300-residue chain is Probable membrane transporter protein YtnM (300 aa).

Helical transmembrane passes span 4–24 (LIVFAFIGLLSQLIDGSLGMA), 33–53 (LLAFGITPAVASASVHLAEVV), 76–96 (LVIPGSIGAFLGAAFLSQLPG), 102–122 (YISLFLLLLGGYVLIRFLFQY), 139–159 (IPLGVIAGFADATGGGGWGPV), 206–226 (LWVFSLMAGGIIAAPIAAWLV), 231–251 (PQLMGVLVGGFIILVNARTLI), and 260–280 (VHPLIYTAIGAIWLSAVLFVL).

It belongs to the 4-toluene sulfonate uptake permease (TSUP) (TC 2.A.102) family.

It localises to the cell membrane. The polypeptide is Probable membrane transporter protein YtnM (ytnM) (Bacillus subtilis (strain 168)).